Reading from the N-terminus, the 108-residue chain is MARDIGLNVPVPEKDCSDVNCPFHGTLPVRGQVITGKVVSDKMTGSVVVQRDYLHFVRKYQRYEKRSSKIHAHNPPCLHARVGDMVSIAECRPLSKTKTYVVVEVNRA.

This sequence belongs to the universal ribosomal protein uS17 family. As to quaternary structure, part of the 30S ribosomal subunit.

In terms of biological role, one of the primary rRNA binding proteins, it binds specifically to the 5'-end of 16S ribosomal RNA. The protein is Small ribosomal subunit protein uS17 of Methanospirillum hungatei JF-1 (strain ATCC 27890 / DSM 864 / NBRC 100397 / JF-1).